The chain runs to 479 residues: Sucrose-6-phosphate hydrolase (479 aa).

A disordered region spans residues 1 to 28 (MTAHDQELRRRAYEEVEKKEPIANSDPH). Substrate is bound by residues 40–43 (LLND), Q59, 102–103 (YS), 161–162 (RD), and E220. D43 is an active-site residue.

It belongs to the glycosyl hydrolase 32 family.

The catalysed reaction is Hydrolysis of terminal non-reducing beta-D-fructofuranoside residues in beta-D-fructofuranosides.. The protein operates within glycan biosynthesis; sucrose metabolism. The polypeptide is Sucrose-6-phosphate hydrolase (sacA) (Bacillus subtilis (strain 168)).